The primary structure comprises 147 residues: Small ribosomal subunit protein uS12 (147 aa).

This sequence belongs to the universal ribosomal protein uS12 family. Part of the 30S ribosomal subunit.

Functionally, with S4 and S5 plays an important role in translational accuracy. Located at the interface of the 30S and 50S subunits. This chain is Small ribosomal subunit protein uS12, found in Sulfolobus acidocaldarius (strain ATCC 33909 / DSM 639 / JCM 8929 / NBRC 15157 / NCIMB 11770).